The primary structure comprises 264 residues: Thymidylate synthase (264 aa).

Arg21 lines the dUMP pocket. His51 lines the (6R)-5,10-methylene-5,6,7,8-tetrahydrofolate pocket. Residue 126–127 (RR) coordinates dUMP. Residue Cys146 is the Nucleophile of the active site. DUMP-binding positions include 166–169 (RSCD), Asn177, and 207–209 (HLY). A (6R)-5,10-methylene-5,6,7,8-tetrahydrofolate-binding site is contributed by Asp169. Position 263 (Ala263) interacts with (6R)-5,10-methylene-5,6,7,8-tetrahydrofolate.

It belongs to the thymidylate synthase family. Bacterial-type ThyA subfamily. Homodimer.

It is found in the cytoplasm. The catalysed reaction is dUMP + (6R)-5,10-methylene-5,6,7,8-tetrahydrofolate = 7,8-dihydrofolate + dTMP. The protein operates within pyrimidine metabolism; dTTP biosynthesis. Its function is as follows. Catalyzes the reductive methylation of 2'-deoxyuridine-5'-monophosphate (dUMP) to 2'-deoxythymidine-5'-monophosphate (dTMP) while utilizing 5,10-methylenetetrahydrofolate (mTHF) as the methyl donor and reductant in the reaction, yielding dihydrofolate (DHF) as a by-product. This enzymatic reaction provides an intracellular de novo source of dTMP, an essential precursor for DNA biosynthesis. This is Thymidylate synthase from Salmonella paratyphi C (strain RKS4594).